A 4250-amino-acid chain; its full sequence is Dynein axonemal heavy chain 1 (4250 aa).

The segment at 1 to 73 (MEECNKEGPS…KSPLTGTDKK (73 aa)) is disordered. Residues 1–1527 (MEECNKEGPS…YIRAVNAEFI (1527 aa)) form a stem region. The span at 24–42 (PESHDLEKILQESNYHPER) shows a compositional bias: basic and acidic residues. A compositionally biased stretch (pro residues) spans 46 to 55 (NPDPKTPPLP). AAA stretches follow at residues 1528–1749 (YGYE…VISA), 1809–2042 (QAIR…NTVK), 2174–2434 (TMMP…VFQG), and 2532–2784 (DYNQ…LARH). The GPAGTGKT motif motif lies at 1566–1573 (GPAGTGKT). 1566–1573 (GPAGTGKT) is an ATP binding site. Residues 1616–1622 (CFDEFNR) carry the CFDEFNR motif motif. Residues 1847-1854 (GPTGSGKS), 2212-2219 (GPTGTGKT), and 2571-2578 (GVGGSGRS) contribute to the ATP site. Residues 2799–3097 (FSILIGQKKM…EELEMKCEQC (299 aa)) are stalk. Positions 3045–3128 (LREAQDDLEV…QETVENLENM (84 aa)) form a coiled coil. 2 AAA regions span residues 3182-3412 (LGNP…EIQA) and 3625-3844 (MQDF…QLKM).

Belongs to the dynein heavy chain family. Consists of at least two heavy chains and a number of intermediate and light chains.

The protein resides in the cytoplasm. It localises to the cytoskeleton. The protein localises to the cilium axoneme. Its subcellular location is the cell projection. It is found in the cilium. The protein resides in the flagellum. Functionally, force generating protein of cilia required for sperm flagellum motility. Produces force towards the minus ends of microtubules. Dynein has ATPase activity; the force-producing power stroke is thought to occur on release of ADP. Required in spermatozoa for the formation of the inner dynein arms and biogenesis of the axoneme. The polypeptide is Dynein axonemal heavy chain 1 (Mus musculus (Mouse)).